We begin with the raw amino-acid sequence, 352 residues long: Elongation factor Ts (352 aa).

Residues Thr81 to Val84 form an involved in Mg(2+) ion dislocation from EF-Tu region.

The protein belongs to the EF-Ts family.

It is found in the cytoplasm. In terms of biological role, associates with the EF-Tu.GDP complex and induces the exchange of GDP to GTP. It remains bound to the aminoacyl-tRNA.EF-Tu.GTP complex up to the GTP hydrolysis stage on the ribosome. The polypeptide is Elongation factor Ts (Campylobacter hominis (strain ATCC BAA-381 / DSM 21671 / CCUG 45161 / LMG 19568 / NCTC 13146 / CH001A)).